A 1005-amino-acid polypeptide reads, in one-letter code: Myosin IE heavy chain (1005 aa).

Positions 8-693 (EGVPDFVLLN…TLFYFEEKRE (686 aa)) constitute a Myosin motor domain. 101–108 (GESGAGKT) lines the ATP pocket. The interval 539–562 (SDPLVQGLFPPTRPEDSKKRPETA) is disordered. Residues 551–560 (RPEDSKKRPE) show a composition bias toward basic and acidic residues. Residues 556–630 (KKRPETAGSQ…RAGFAGRIEY (75 aa)) form an actin-binding region. 2 consecutive IQ domains span residues 694–722 (LEMP…RKAA) and 716–745 (WNQR…HRAF). The 195-residue stretch at 810–1004 (KKKWDFRRHF…KGNQATIQFK (195 aa)) folds into the TH1 domain.

It belongs to the TRAFAC class myosin-kinesin ATPase superfamily. Myosin family. Myosin I heavy chain is single-headed. Dimer of a heavy and a light chain. Inability to self-assemble into filaments.

Functionally, myosin is a protein that binds to actin and has ATPase activity that is activated by actin. May play a role in moving membranes relative to actin. The chain is Myosin IE heavy chain (myoE) from Dictyostelium discoideum (Social amoeba).